Reading from the N-terminus, the 237-residue chain is Ras-related protein Rab-23 (237 aa).

Alanine 19 contacts GDP. The GTP site is built by valine 20, glycine 21, lysine 22, serine 23, and serine 24. Positions 21, 22, 23, 24, and 37 each coordinate GDP. Residue serine 23 participates in Mg(2+) binding. The Switch 1 signature appears at 28–46; the sequence is RYCKGIFTKDYKKTIGVDF. Tyrosine 38 provides a ligand contact to GTP. Residue lysine 40 coordinates GDP. Threonine 41 contributes to the GTP binding site. 2 residues coordinate Mg(2+): threonine 41 and aspartate 64. Residues 65–84 carry the Switch 2 motif; it reads TAGQEEFDAITKAYYRGAQA. GTP contacts are provided by glycine 67, asparagine 121, lysine 122, aspartate 124, serine 151, valine 152, and lysine 153. GDP contacts are provided by asparagine 121, lysine 122, and aspartate 124. The GDP site is built by valine 152 and lysine 153. Phosphoserine occurs at positions 186 and 187. The tract at residues 204-237 is disordered; it reads QNSSSLNGGDVINLRPNKQRTKRTRNPFSSCSVP. Residue cysteine 234 is modified to Cysteine methyl ester. Cysteine 234 carries the S-geranylgeranyl cysteine lipid modification. The propeptide at 235-237 is removed in mature form; that stretch reads SVP.

Belongs to the small GTPase superfamily. Rab family. As to quaternary structure, interacts with SUFU. The cofactor is Mg(2+). In terms of tissue distribution, detected in brain neurons (at protein level). Forebrain and midbrain.

The protein resides in the cell membrane. The protein localises to the cytoplasm. It localises to the endosome membrane. Its subcellular location is the cytoplasmic vesicle. It is found in the autophagosome. The protein resides in the phagosome. The protein localises to the phagosome membrane. It carries out the reaction GTP + H2O = GDP + phosphate + H(+). Its activity is regulated as follows. Regulated by guanine nucleotide exchange factors (GEFs) which promote the exchange of bound GDP for free GTP. Regulated by GTPase activating proteins (GAPs) which increase the GTP hydrolysis activity. Inhibited by GDP dissociation inhibitors (GDIs). In terms of biological role, the small GTPases Rab are key regulators of intracellular membrane trafficking, from the formation of transport vesicles to their fusion with membranes. Rabs cycle between an inactive GDP-bound form and an active GTP-bound form that is able to recruit to membranes different set of downstream effectors directly responsible for vesicle formation, movement, tethering and fusion. Plays a role in autophagic vacuole assembly, and mediates defense against pathogens, such as S.aureus, by promoting their capture by autophagosomes that then merge with lysosomes. Together with SUFU, prevents nuclear import of GLI1, and thereby inhibits GLI1 transcription factor activity. Regulates GLI1 in differentiating chondrocytes. Likewise, regulates GLI3 proteolytic processing and modulates GLI2 and GLI3 transcription factor activity. The protein is Ras-related protein Rab-23 of Mus musculus (Mouse).